Here is a 154-residue protein sequence, read N- to C-terminus: Aspartate carbamoyltransferase regulatory chain (154 aa).

4 residues coordinate Zn(2+): cysteine 109, cysteine 114, cysteine 138, and cysteine 141.

This sequence belongs to the PyrI family. In terms of assembly, contains catalytic and regulatory chains. The cofactor is Zn(2+).

Its function is as follows. Involved in allosteric regulation of aspartate carbamoyltransferase. The sequence is that of Aspartate carbamoyltransferase regulatory chain from Yersinia pestis.